A 148-amino-acid chain; its full sequence is [Ribosomal protein bS18]-alanine N-acetyltransferase (148 aa).

In terms of domain architecture, N-acetyltransferase spans 2 to 147; it reads NTISSLETTD…DAIIMALPIS (146 aa). 69–71 contributes to the acetyl-CoA binding site; the sequence is IAV. Glutamate 103 serves as the catalytic Proton acceptor. Asparagine 108 is a binding site for acetyl-CoA. Catalysis depends on tyrosine 115, which acts as the Proton donor.

Belongs to the acetyltransferase family. RimI subfamily.

It localises to the cytoplasm. The enzyme catalyses N-terminal L-alanyl-[ribosomal protein bS18] + acetyl-CoA = N-terminal N(alpha)-acetyl-L-alanyl-[ribosomal protein bS18] + CoA + H(+). In terms of biological role, acetylates the N-terminal alanine of ribosomal protein bS18. The sequence is that of [Ribosomal protein bS18]-alanine N-acetyltransferase from Escherichia coli O157:H7.